We begin with the raw amino-acid sequence, 108 residues long: UPF0145 protein Patl_2194 (108 aa).

It belongs to the UPF0145 family.

The protein is UPF0145 protein Patl_2194 of Pseudoalteromonas atlantica (strain T6c / ATCC BAA-1087).